The following is a 239-amino-acid chain: Orotidine 5'-phosphate decarboxylase (239 aa).

Residues Asp-11, Lys-33, 60–69 (DLKFHDIPTT), Thr-117, Arg-178, Gln-187, Gly-207, and Arg-208 contribute to the substrate site. Catalysis depends on Lys-62, which acts as the Proton donor.

It belongs to the OMP decarboxylase family. Type 1 subfamily. In terms of assembly, homodimer.

It carries out the reaction orotidine 5'-phosphate + H(+) = UMP + CO2. The protein operates within pyrimidine metabolism; UMP biosynthesis via de novo pathway; UMP from orotate: step 2/2. Its function is as follows. Catalyzes the decarboxylation of orotidine 5'-monophosphate (OMP) to uridine 5'-monophosphate (UMP). This is Orotidine 5'-phosphate decarboxylase from Nitrosospira multiformis (strain ATCC 25196 / NCIMB 11849 / C 71).